The primary structure comprises 290 residues: Ribosomal RNA small subunit methyltransferase A (290 aa).

6 residues coordinate S-adenosyl-L-methionine: asparagine 27, leucine 29, glycine 54, glutamate 75, aspartate 100, and asparagine 125.

Belongs to the class I-like SAM-binding methyltransferase superfamily. rRNA adenine N(6)-methyltransferase family. RsmA subfamily.

The protein resides in the cytoplasm. It catalyses the reaction adenosine(1518)/adenosine(1519) in 16S rRNA + 4 S-adenosyl-L-methionine = N(6)-dimethyladenosine(1518)/N(6)-dimethyladenosine(1519) in 16S rRNA + 4 S-adenosyl-L-homocysteine + 4 H(+). Its function is as follows. Specifically dimethylates two adjacent adenosines (A1518 and A1519) in the loop of a conserved hairpin near the 3'-end of 16S rRNA in the 30S particle. May play a critical role in biogenesis of 30S subunits. The polypeptide is Ribosomal RNA small subunit methyltransferase A (Streptococcus pneumoniae (strain CGSP14)).